The sequence spans 337 residues: Movement protein (337 aa).

The span at 1-11 (MAGLWRSNSTL) shows a compositional bias: polar residues. 2 disordered regions span residues 1–24 (MAGL…QTET) and 273–337 (SVVR…VRQT).

Its subcellular location is the host cell junction. It is found in the host plasmodesma. Transports viral genome to neighboring plant cells directly through plasmosdesmata, without any budding. The movement protein allows efficient cell to cell propagation, by bypassing the host cell wall barrier. Acts by forming a tubular structure at the host plasmodesmata, enlarging it enough to allow free passage of virion capsids. This Olive latent virus 2 (isolate Italy) (OLV-2) protein is Movement protein.